Here is a 393-residue protein sequence, read N- to C-terminus: Chorismate synthase (393 aa).

NADP(+) is bound by residues Arg40 and Arg46. FMN contacts are provided by residues 129 to 131, 249 to 250, Gly301, 316 to 320, and Arg342; these read RSS, QA, and KPIPT.

Belongs to the chorismate synthase family. In terms of assembly, homotetramer. It depends on FMNH2 as a cofactor.

It carries out the reaction 5-O-(1-carboxyvinyl)-3-phosphoshikimate = chorismate + phosphate. The protein operates within metabolic intermediate biosynthesis; chorismate biosynthesis; chorismate from D-erythrose 4-phosphate and phosphoenolpyruvate: step 7/7. Catalyzes the anti-1,4-elimination of the C-3 phosphate and the C-6 proR hydrogen from 5-enolpyruvylshikimate-3-phosphate (EPSP) to yield chorismate, which is the branch point compound that serves as the starting substrate for the three terminal pathways of aromatic amino acid biosynthesis. This reaction introduces a second double bond into the aromatic ring system. This chain is Chorismate synthase, found in Geobacter sulfurreducens (strain ATCC 51573 / DSM 12127 / PCA).